We begin with the raw amino-acid sequence, 280 residues long: ATP synthase gamma chain (280 aa).

This sequence belongs to the ATPase gamma chain family. F-type ATPases have 2 components, CF(1) - the catalytic core - and CF(0) - the membrane proton channel. CF(1) has five subunits: alpha(3), beta(3), gamma(1), delta(1), epsilon(1). CF(0) has three main subunits: a, b and c.

It is found in the cell membrane. Produces ATP from ADP in the presence of a proton gradient across the membrane. The gamma chain is believed to be important in regulating ATPase activity and the flow of protons through the CF(0) complex. The polypeptide is ATP synthase gamma chain (Mycoplasma mycoides subsp. mycoides SC (strain CCUG 32753 / NCTC 10114 / PG1)).